We begin with the raw amino-acid sequence, 238 residues long: MKFTPSIVIDAPQYYVDHFNGKYNVDKCVILRDLQLETDSESMPSSLKHLTKPTHILDLTNNDLIMIPDLSRRDDIHTLLLGRNNIVEVDGRLLPMNVQNLTLSNNSIRRFEDLQRLRRAPRTLKNLTLIGNQVCHLANYREHVLRLVPHLETLDFQNVTAEERKSAMSFPRQADGDTLGPVNTAIRDNGSRDKTMEIMNLVVSKMTVERRNELKKQLAEATSLEEIARLEKLLSGGV.

LRR repeat units follow at residues 53 to 74 (PTHI…SRRD), 75 to 95 (DIHT…RLLP), and 97 to 118 (NVQN…QRLR). The LRRCT domain occupies 132-170 (NQVCHLANYREHVLRLVPHLETLDFQNVTAEERKSAMSF). Positions 167-189 (AMSFPRQADGDTLGPVNTAIRDN) are disordered.

The protein belongs to the U2 small nuclear ribonucleoprotein A family. Belongs to the CWC complex (or CEF1-associated complex), a spliceosome sub-complex reminiscent of a late-stage spliceosome composed of the U2, U5 and U6 snRNAs and at least BUD13, BUD31, BRR2, CDC40, CEF1, CLF1, CUS1, CWC2, CWC15, CWC21, CWC22, CWC23, CWC24, CWC25, CWC27, ECM2, HSH155, IST3, ISY1, LEA1, MSL1, NTC20, PRP8, PRP9, PRP11, PRP19, PRP21, PRP22, PRP45, PRP46, SLU7, SMB1, SMD1, SMD2, SMD3, SMX2, SMX3, SNT309, SNU114, SPP2, SYF1, SYF2, RSE1 and YJU2. Interacts with MSL1.

The protein resides in the nucleus. Involved in pre-mRNA splicing. Associates to U2 snRNA in a MSL1 dependent manner and is required for normal accumulation of U2 snRNA. Required for the spliceosome assembly and the efficient addition of U2 snRNP onto the pre-mRNA. This Saccharomyces cerevisiae (strain ATCC 204508 / S288c) (Baker's yeast) protein is U2 small nuclear ribonucleoprotein A' (LEA1).